The following is a 23-amino-acid chain: Thylakoid lumenal 17.4 kDa protein (23 aa).

Residues 1 to 23 (ANQRLPPLSNDPDRCERAFVGNT) form a disordered region.

The protein resides in the plastid. It localises to the chloroplast thylakoid lumen. The polypeptide is Thylakoid lumenal 17.4 kDa protein (Spinacia oleracea (Spinach)).